The following is a 199-amino-acid chain: Fe/S biogenesis protein NfuA (199 aa).

Residues cysteine 151 and cysteine 154 each coordinate [4Fe-4S] cluster.

Belongs to the NfuA family. As to quaternary structure, homodimer. [4Fe-4S] cluster is required as a cofactor.

Functionally, involved in iron-sulfur cluster biogenesis. Binds a 4Fe-4S cluster, can transfer this cluster to apoproteins, and thereby intervenes in the maturation of Fe/S proteins. Could also act as a scaffold/chaperone for damaged Fe/S proteins. The protein is Fe/S biogenesis protein NfuA of Xanthomonas axonopodis pv. citri (strain 306).